The following is a 345-amino-acid chain: Probable galacturonosyltransferase-like 3 (345 aa).

Topologically, residues 1 to 7 (MSSLRLR) are cytoplasmic. Residues 8–28 (LCLLLLLPITISCVTVTLTDL) form a helical; Signal-anchor for type II membrane protein membrane-spanning segment. At 29–345 (PAFREAPAFR…FRYSPLISDS (317 aa)) the chain is on the lumenal side. Asn197 carries an N-linked (GlcNAc...) asparagine glycan.

The protein belongs to the glycosyltransferase 8 family.

It is found in the golgi apparatus membrane. It participates in glycan metabolism; pectin biosynthesis. Functionally, may be involved in pectin and/or xylans biosynthesis in cell walls. This is Probable galacturonosyltransferase-like 3 (GATL3) from Arabidopsis thaliana (Mouse-ear cress).